The following is a 51-amino-acid chain: Insulin (51 aa).

Disulfide bonds link Cys-8–Cys-37, Cys-20–Cys-50, and Cys-36–Cys-41.

The protein belongs to the insulin family. In terms of assembly, heterodimer of a B chain and an A chain linked by two disulfide bonds.

The protein resides in the secreted. Its function is as follows. Insulin decreases blood glucose concentration. It increases cell permeability to monosaccharides, amino acids and fatty acids. It accelerates glycolysis, the pentose phosphate cycle, and glycogen synthesis in liver. The polypeptide is Insulin (ins) (Gadus morhua subsp. callarias (Baltic cod)).